Here is a 954-residue protein sequence, read N- to C-terminus: Mitogen-activated protein kinase kinase kinase 10 (954 aa).

An SH3 domain is found at P16–P81. Positions L98–I360 constitute a Protein kinase domain. ATP-binding positions include I104–V112 and K125. The active-site Proton acceptor is D222. T258 carries the post-translational modification Phosphothreonine; by autocatalysis. S262 is modified (phosphoserine; by autocatalysis and MAP4K1). 2 leucine-zipper regions span residues I384–L405 and L419–L440. Disordered regions lie at residues P490 to H665, R716 to G739, and S757 to H954. Phosphoserine occurs at positions 498, 502, and 506. The span at A501–P511 shows a compositional bias: low complexity. T558 carries the phosphothreonine modification. Residues Q566–G578 are compositionally biased toward basic and acidic residues. Over residues E611–D620 the composition is skewed to acidic residues. The span at S631–L640 shows a compositional bias: low complexity. Residues A773–S790 show a composition bias toward pro residues. Residue R857 is modified to Omega-N-methylarginine. Pro residues predominate over residues P913–V927.

Belongs to the protein kinase superfamily. STE Ser/Thr protein kinase family. MAP kinase kinase kinase subfamily. Homodimer. Interacts with SH3RF2. It depends on Mg(2+) as a cofactor. Post-translationally, autophosphorylation on serine and threonine residues within the activation loop plays a role in enzyme activation. In terms of tissue distribution, expressed in brain and skeletal muscle.

It catalyses the reaction L-seryl-[protein] + ATP = O-phospho-L-seryl-[protein] + ADP + H(+). The catalysed reaction is L-threonyl-[protein] + ATP = O-phospho-L-threonyl-[protein] + ADP + H(+). Homodimerization via the leucine zipper domains is required for autophosphorylation and subsequent activation. In terms of biological role, activates the JUN N-terminal pathway. The protein is Mitogen-activated protein kinase kinase kinase 10 (MAP3K10) of Homo sapiens (Human).